Reading from the N-terminus, the 296-residue chain is Coiled-coil domain-containing protein 69 (296 aa).

Residues 1 to 18 (MGCRHSRLSSCKPPKKKR) are compositionally biased toward basic residues. A disordered region spans residues 1-41 (MGCRHSRLSSCKPPKKKRQEPEPEQPPRPEPHELGPLNGDT). Residue Gly2 is the site of N-myristoyl glycine attachment. The span at 19-33 (QEPEPEQPPRPEPHE) shows a compositional bias: basic and acidic residues. A coiled-coil region spans residues 48-272 (CASEEAERHQ…QEKEELLYRV (225 aa)). Ser154 and Ser241 each carry phosphoserine.

This sequence belongs to the CCDC69 family. As to expression, highly expressed in duodenum, esophagus, pancreas, prostate, salivary gland, thymus and urinary bladder.

It is found in the cytoplasm. The protein resides in the cytoskeleton. It localises to the spindle. Its subcellular location is the midbody. In terms of biological role, may act as a scaffold to regulate the recruitment and assembly of spindle midzone components. Required for the localization of AURKB and PLK1 to the spindle midzone. The protein is Coiled-coil domain-containing protein 69 of Homo sapiens (Human).